The chain runs to 1872 residues: Chitin synthase 6 (1872 aa).

The tract at residues Met-1 to Leu-23 is disordered. In terms of domain architecture, Myosin motor spans Met-1 to Asp-779. ATP is bound at residue Gly-104–Thr-111. Asn-123, Asn-291, Asn-428, and Asn-559 each carry an N-linked (GlcNAc...) asparagine glycan. The segment at Val-587–Ser-652 is disordered. The segment at Leu-659–Asp-683 is actin-binding. An N-linked (GlcNAc...) asparagine glycan is attached at Asn-661. 2 helical membrane passes run Trp-881 to Gly-901 and Phe-920 to Val-940. Residues Gln-944–Phe-1003 form the Cytochrome b5 heme-binding domain. Asn-1030, Asn-1055, and Asn-1120 each carry an N-linked (GlcNAc...) asparagine glycan. The helical transmembrane segment at Phe-1193–Leu-1213 threads the bilayer. 2 N-linked (GlcNAc...) asparagine glycosylation sites follow: Asn-1450 and Asn-1556. 3 helical membrane passes run Phe-1581–Val-1601, Val-1614–Ile-1634, and Met-1641–Leu-1661. One can recognise a DEK-C domain in the interval Leu-1814–Ser-1869.

This sequence belongs to the chitin synthase family. Class V subfamily.

It localises to the cell membrane. It carries out the reaction [(1-&gt;4)-N-acetyl-beta-D-glucosaminyl](n) + UDP-N-acetyl-alpha-D-glucosamine = [(1-&gt;4)-N-acetyl-beta-D-glucosaminyl](n+1) + UDP + H(+). Functionally, polymerizes chitin, a structural polymer of the cell wall and septum, by transferring the sugar moiety of UDP-GlcNAc to the non-reducing end of the growing chitin polymer. Required for appressorium penetration and invasive growth. The protein is Chitin synthase 6 of Pyricularia oryzae (strain 70-15 / ATCC MYA-4617 / FGSC 8958) (Rice blast fungus).